Reading from the N-terminus, the 384-residue chain is Lipid-A-disaccharide synthase 1 (384 aa).

Belongs to the LpxB family.

It catalyses the reaction a lipid X + a UDP-2-N,3-O-bis[(3R)-3-hydroxyacyl]-alpha-D-glucosamine = a lipid A disaccharide + UDP + H(+). It participates in bacterial outer membrane biogenesis; LPS lipid A biosynthesis. Condensation of UDP-2,3-diacylglucosamine and 2,3-diacylglucosamine-1-phosphate to form lipid A disaccharide, a precursor of lipid A, a phosphorylated glycolipid that anchors the lipopolysaccharide to the outer membrane of the cell. The polypeptide is Lipid-A-disaccharide synthase 1 (Legionella pneumophila subsp. pneumophila (strain Philadelphia 1 / ATCC 33152 / DSM 7513)).